The sequence spans 1418 residues: JmjC domain-containing histone demethylation protein 1 (1418 aa).

Disordered stretches follow at residues Met1–Thr86, Ala102–Asp162, and Gly308–Asn329. The span at Trp44–Val60 shows a compositional bias: basic and acidic residues. Positions Thr61–Asn71 are enriched in polar residues. The segment covering Ser127–Lys139 has biased composition (basic and acidic residues). Residues Pro143–Asp162 are compositionally biased toward polar residues. Residues Gly308–Asp321 show a composition bias toward basic and acidic residues. The segment at Gln331–Ile391 adopts a PHD-type zinc-finger fold. Residues Val588–Lys746 enclose the JmjC domain. Residue Thr639 coordinates substrate. The Fe cation site is built by His642 and Asp644. Lys659 contributes to the substrate binding site. Residue His714 coordinates Fe cation. Disordered stretches follow at residues Pro891–Ile964, Asn1090–Cys1118, Tyr1130–Arg1195, and Lys1250–Asp1394. The segment covering Leu907–Glu925 has biased composition (basic and acidic residues). Basic and acidic residues-rich tracts occupy residues Tyr1130–Lys1143 and Ala1186–Arg1195. A compositionally biased stretch (polar residues) spans Lys1250–Ala1263. Residues Ser1341–Ser1352 show a composition bias toward low complexity.

The protein belongs to the JHDM1 histone demethylase family. The cofactor is Fe(2+).

The protein resides in the nucleus. It catalyses the reaction N(6),N(6)-dimethyl-L-lysyl(36)-[histone H3] + 2 2-oxoglutarate + 2 O2 = L-lysyl(36)-[histone H3] + 2 formaldehyde + 2 succinate + 2 CO2. In terms of biological role, histone demethylase that specifically demethylates 'Lys-36' of histone H3, thereby playing a central role in histone code. This chain is JmjC domain-containing histone demethylation protein 1 (jhd1), found in Aspergillus fumigatus (strain ATCC MYA-4609 / CBS 101355 / FGSC A1100 / Af293) (Neosartorya fumigata).